Consider the following 383-residue polypeptide: TnpB-like protein ORF383B (383 aa).

C328, C331, C345, and C348 together coordinate Zn(2+).

It in the N-terminal section; belongs to the transposase 2 family. This sequence in the C-terminal section; belongs to the transposase 35 family.

This chain is TnpB-like protein ORF383B, found in Acidianus convivator (ATV).